Reading from the N-terminus, the 182-residue chain is Small ribosomal subunit protein uS4c (182 aa).

The S4 RNA-binding domain occupies 82–143 (MRLDNILFRL…KERSKVLIQN (62 aa)).

Belongs to the universal ribosomal protein uS4 family. In terms of assembly, part of the 30S ribosomal subunit. Contacts protein S5. The interaction surface between S4 and S5 is involved in control of translational fidelity.

It localises to the plastid. The protein resides in the chloroplast. One of the primary rRNA binding proteins, it binds directly to 16S rRNA where it nucleates assembly of the body of the 30S subunit. In terms of biological role, with S5 and S12 plays an important role in translational accuracy. The polypeptide is Small ribosomal subunit protein uS4c (rps4) (Alophia veracruzana (Mexican pine woods lily)).